A 504-amino-acid chain; its full sequence is Plasma protease C1 inhibitor (504 aa).

The first 22 residues, 1–22 (MASKLTPLTLLLLLLAGDRAFS), serve as a signal peptide directing secretion. The interval 23–75 (DSEVTSHSSQDPLVVQEGSRDSVPERDGSRSPIEHTGQSSTWPTTSGSTKISN) is disordered. The span at 24-33 (SEVTSHSSQD) shows a compositional bias: polar residues. The segment covering 40-55 (GSRDSVPERDGSRSPI) has biased composition (basic and acidic residues). Polar residues predominate over residues 58–75 (TGQSSTWPTTSGSTKISN). 5 N-linked (GlcNAc...) asparagine glycosylation sites follow: Asn-75, Asn-83, Asn-107, Asn-243, and Asn-356. Residues 94–132 (AQLPEDSPSQSPVNSSSPPSTASAPPTQAPTEPLCPEPL) form a disordered region. Residues 100–125 (SPSQSPVNSSSPPSTASAPPTQAPTE) are compositionally biased toward low complexity.

This sequence belongs to the serpin family. Interacts with MASP1.

The protein resides in the secreted. Its function is as follows. Serine protease inhibitor, which acrs as a regulator of the classical complement pathway. Forms a proteolytically inactive stoichiometric complex with the C1r or C1s proteases. May also regulate blood coagulation, fibrinolysis and the generation of kinins. Very efficient inhibitor of FXIIa. Inhibits chymotrypsin and kallikrein. The sequence is that of Plasma protease C1 inhibitor (Serping1) from Rattus norvegicus (Rat).